A 147-amino-acid chain; its full sequence is Small ribosomal subunit protein uS12 (147 aa).

This sequence belongs to the universal ribosomal protein uS12 family. As to quaternary structure, part of the 30S ribosomal subunit.

Functionally, with S4 and S5 plays an important role in translational accuracy. Located at the interface of the 30S and 50S subunits. This chain is Small ribosomal subunit protein uS12, found in Methanococcus vannielii (strain ATCC 35089 / DSM 1224 / JCM 13029 / OCM 148 / SB).